We begin with the raw amino-acid sequence, 708 residues long: Quinohemoprotein alcohol dehydrogenase (708 aa).

Positions 1–31 (MERLIDNSHGWPGRMVWLLAACLGSAAAFAQ) are cleaved as a signal peptide. Position 101 (E101) interacts with pyrroloquinoline quinone. C147 and C148 form a disulfide bridge. Residues R153, T198, and 214-215 (GA) contribute to the pyrroloquinoline quinone site. Residue E216 participates in Ca(2+) binding. T274 contacts pyrroloquinoline quinone. Ca(2+)-binding residues include N294 and D339. D339 (proton acceptor) is an active-site residue. Pyrroloquinoline quinone-binding positions include K366, 425-426 (NW), and V575. The 90-residue stretch at 619–708 (YDPAKVEAGT…GTADAIRPKP (90 aa)) folds into the Cytochrome c domain. Residues C635, C638, H639, and M678 each contribute to the heme c site.

The protein belongs to the bacterial PQQ dehydrogenase family. Monomer. Requires pyrroloquinoline quinone as cofactor. It depends on Ca(2+) as a cofactor. Heme c is required as a cofactor. In the crystallographic structures Trp-543 is oxidized to 2'-hydroxytryptophan.

Its subcellular location is the periplasm. The enzyme catalyses 2 oxidized [azurin] + a primary alcohol = 2 reduced [azurin] + an aldehyde + 2 H(+). Functionally, catalyzes the dye-linked oxidation of primary alcohols to the corresponding aldehydes and the (subsequent) oxidation of the aldehydes to carboxylic acids. Methanol is not a substrate. This Comamonas testosteroni (Pseudomonas testosteroni) protein is Quinohemoprotein alcohol dehydrogenase.